We begin with the raw amino-acid sequence, 724 residues long: Probable ATP-dependent RNA helicase DDX4 (724 aa).

The disordered stretch occupies residues M1–Y246. A compositionally biased stretch (polar residues) spans N30–S42. Over residues D69–N78 the composition is skewed to basic and acidic residues. A compositionally biased stretch (gly residues) spans R150–L162. The segment covering G195–G205 has biased composition (low complexity). S222 and S226 each carry phosphoserine. An interaction with RANBP9 region spans residues K228–I247. The Q motif signature appears at L288–K316. Residues I319–F502 form the Helicase ATP-binding domain. A332–T339 serves as a coordination point for ATP. The DEAD box signature appears at D446–D449. The 146-residue stretch at K530 to A675 folds into the Helicase C-terminal domain. Polar residues predominate over residues L704–P715. Residues L704–D724 are disordered. At S722 the chain carries Phosphoserine.

Belongs to the DEAD box helicase family. DDX4/VASA subfamily. Found in a mRNP complex, at least composed of TDRD1, TDRD6, TDRD7 and DDX4. Interacts with RANBP9. Interacts with RANBP10. Interacts with PIWIL2 and MAEL. Interacts with BMAL1 and CLOCK. Interacts with Tex19.1 and, probably, Tex19.2. Interacts with RBM46. In terms of tissue distribution, expressed only in ovary and testis. Expressed in migratory primordial germ cells in the region of the gonadal ridge in both sexes.

The protein resides in the cytoplasm. The protein localises to the perinuclear region. The enzyme catalyses ATP + H2O = ADP + phosphate + H(+). Its function is as follows. ATP-dependent RNA helicase required during spermatogenesis. Required to repress transposable elements and preventing their mobilization, which is essential for the germline integrity. Acts via the piRNA metabolic process, which mediates the repression of transposable elements during meiosis by forming complexes composed of piRNAs and Piwi proteins and governs the methylation and subsequent repression of transposons. Involved in the secondary piRNAs metabolic process, the production of piRNAs in fetal male germ cells through a ping-pong amplification cycle. Required for PIWIL2 slicing-triggered piRNA biogenesis: helicase activity enables utilization of one of the slice cleavage fragments generated by PIWIL2 and processing these pre-piRNAs into piRNAs. This Homo sapiens (Human) protein is Probable ATP-dependent RNA helicase DDX4 (DDX4).